Reading from the N-terminus, the 441-residue chain is Maltokinase (441 aa).

Belongs to the aminoglycoside phosphotransferase family. As to quaternary structure, monomer.

It carries out the reaction D-maltose + ATP = alpha-maltose 1-phosphate + ADP + H(+). It functions in the pathway glycan biosynthesis; glycogen biosynthesis. Catalyzes the ATP-dependent phosphorylation of maltose to maltose 1-phosphate. Is involved in a branched alpha-glucan biosynthetic pathway from trehalose, together with TreS, GlgE and GlgB. The sequence is that of Maltokinase (mak) from Mycolicibacterium vanbaalenii (strain DSM 7251 / JCM 13017 / BCRC 16820 / KCTC 9966 / NRRL B-24157 / PYR-1) (Mycobacterium vanbaalenii).